The primary structure comprises 504 residues: MSVMLETSLGDLIIDLEVDKCPRTCENFIKLCKLKYYALNAFFNVSKNFIAQSGDPTATGTGGESLASYVYSQSPSGPRPPRYFTPEILNSLKHTHKGTLSMAVAPINPPGCGSQFFITLADNIDYLDGKHAVFGHVIEGLDTLDKINDAFTDKEGRPLQNIRIRHVEILEDPFPDPDNFMPIPQSPIRPPDDLSKVRIADTEDPNAVIPEEEAEELRRRTEAASSALTLEMIGDLPFAAVRPPENILFVCKLNPVTQDEDLELIFSRFGKILSCEVVRDKKSGDSLQYAFIEFDEREAAEQAYFKMQNVLVDDRRIWVDFSQSVAKMNRSMLSSSNPTGRGGRGGRGGRGGNYSGRRDGDRDRDRDSGWSSRRDAPDSRRPPPPPVPMSSSRDVGGTEGYGLVFDDRSAPSSRGSKRDRERSPKRERDRERERDRSPRRDRDRERDRSPRRDRDRERDDHDRRDRDRNGRDRERNGDRERYRERSRERENERYRERDDRDRRR.

The region spanning 1–169 (MSVMLETSLG…QNIRIRHVEI (169 aa)) is the PPIase cyclophilin-type domain. The RRM domain occupies 246 to 324 (NILFVCKLNP…RRIWVDFSQS (79 aa)). The span at 330 to 339 (RSMLSSSNPT) shows a compositional bias: polar residues. The segment at 330–504 (RSMLSSSNPT…RERDDRDRRR (175 aa)) is disordered. The segment covering 340–354 (GRGGRGGRGGRGGNY) has biased composition (gly residues). 2 stretches are compositionally biased toward basic and acidic residues: residues 356 to 381 (GRRDGDRDRDRDSGWSSRRDAPDSRR) and 416 to 504 (SKRD…DRRR).

Belongs to the cyclophilin-type PPIase family. PPIL4 subfamily.

It localises to the nucleus. It catalyses the reaction [protein]-peptidylproline (omega=180) = [protein]-peptidylproline (omega=0). Functionally, PPIases accelerate the folding of proteins. It catalyzes the cis-trans isomerization of proline imidic peptide bonds in oligopeptides. The sequence is that of Peptidyl-prolyl cis-trans isomerase-like 4 (CYP6) from Cryptococcus neoformans var. neoformans serotype D (strain B-3501A) (Filobasidiella neoformans).